We begin with the raw amino-acid sequence, 345 residues long: Protein RecA (345 aa).

66–73 (GPESSGKT) is an ATP binding site.

This sequence belongs to the RecA family.

It is found in the cytoplasm. Its function is as follows. Can catalyze the hydrolysis of ATP in the presence of single-stranded DNA, the ATP-dependent uptake of single-stranded DNA by duplex DNA, and the ATP-dependent hybridization of homologous single-stranded DNAs. It interacts with LexA causing its activation and leading to its autocatalytic cleavage. The polypeptide is Protein RecA (Helicobacter hepaticus (strain ATCC 51449 / 3B1)).